Consider the following 546-residue polypeptide: uncharacterized protein (546 aa).

The SLH domain maps to 52-123 (SVAELRDVQP…NTIEQLLQEN (72 aa)).

This sequence belongs to the OprB family.

This is an uncharacterized protein from Synechocystis sp. (strain ATCC 27184 / PCC 6803 / Kazusa).